The primary structure comprises 179 residues: ATP synthase subunit delta (179 aa).

It belongs to the ATPase delta chain family. F-type ATPases have 2 components, F(1) - the catalytic core - and F(0) - the membrane proton channel. F(1) has five subunits: alpha(3), beta(3), gamma(1), delta(1), epsilon(1). F(0) has three main subunits: a(1), b(2) and c(10-14). The alpha and beta chains form an alternating ring which encloses part of the gamma chain. F(1) is attached to F(0) by a central stalk formed by the gamma and epsilon chains, while a peripheral stalk is formed by the delta and b chains.

The protein resides in the cell membrane. In terms of biological role, f(1)F(0) ATP synthase produces ATP from ADP in the presence of a proton or sodium gradient. F-type ATPases consist of two structural domains, F(1) containing the extramembraneous catalytic core and F(0) containing the membrane proton channel, linked together by a central stalk and a peripheral stalk. During catalysis, ATP synthesis in the catalytic domain of F(1) is coupled via a rotary mechanism of the central stalk subunits to proton translocation. Functionally, this protein is part of the stalk that links CF(0) to CF(1). It either transmits conformational changes from CF(0) to CF(1) or is implicated in proton conduction. In Listeria monocytogenes serotype 4b (strain CLIP80459), this protein is ATP synthase subunit delta.